Reading from the N-terminus, the 390-residue chain is Pre-mycofactocin synthase (390 aa).

The FMN hydroxy acid dehydrogenase domain occupies 1–383; it reads MADEWFETVA…RSDDILIPAD (383 aa). The FMN site is built by serine 108, glutamine 128, threonine 156, and lysine 254. Histidine 278 functions as the Proton acceptor in the catalytic mechanism. Residues 309-313 and 332-333 contribute to the FMN site; these read DGGIR and GR.

The protein belongs to the FMN-dependent alpha-hydroxy acid dehydrogenase family. FMN serves as cofactor.

It catalyses the reaction 3-amino-5-[(4-hydroxyphenyl)methyl]-4,4-dimethyl-2-pyrrolidin-2-one + O2 + H2O = pre-mycofactocin + H2O2 + NH4(+). Functionally, involved in the biosynthesis of the enzyme cofactor mycofactocin (MFT). Catalyzes the oxidative deamination of AHDP (3-amino-5-[(4-hydroxyphenyl)methyl]-4,4-dimethyl-2-pyrrolidin-2-one), forming an alpha-keto amide moiety on the resulting molecule, which is called pre-mycofactocin (PMFT). This reaction occurs via a 5-[(4-hydroxyphenyl)methyl]-3-imino-4,4-dimethylpyrrolidin-2-one intermediate, which converts to PMFT. The alpha-keto amide moiety is the redox-active center for the redox activity of mycofactocin. The protein is Pre-mycofactocin synthase of Mycobacterium ulcerans (strain Agy99).